Here is a 165-residue protein sequence, read N- to C-terminus: Chorismate pyruvate-lyase (165 aa).

Substrate is bound by residues methionine 35, arginine 77, leucine 115, and glutamate 156.

This sequence belongs to the UbiC family. As to quaternary structure, monomer.

It is found in the cytoplasm. The catalysed reaction is chorismate = 4-hydroxybenzoate + pyruvate. It functions in the pathway cofactor biosynthesis; ubiquinone biosynthesis. Its function is as follows. Removes the pyruvyl group from chorismate, with concomitant aromatization of the ring, to provide 4-hydroxybenzoate (4HB) for the ubiquinone pathway. This Escherichia coli O17:K52:H18 (strain UMN026 / ExPEC) protein is Chorismate pyruvate-lyase.